We begin with the raw amino-acid sequence, 214 residues long: Uridine kinase (214 aa).

15 to 22 serves as a coordination point for ATP; sequence GASASGKS.

Belongs to the uridine kinase family.

Its subcellular location is the cytoplasm. The enzyme catalyses uridine + ATP = UMP + ADP + H(+). It carries out the reaction cytidine + ATP = CMP + ADP + H(+). It functions in the pathway pyrimidine metabolism; CTP biosynthesis via salvage pathway; CTP from cytidine: step 1/3. The protein operates within pyrimidine metabolism; UMP biosynthesis via salvage pathway; UMP from uridine: step 1/1. The sequence is that of Uridine kinase from Aeromonas salmonicida (strain A449).